We begin with the raw amino-acid sequence, 1443 residues long: Lysophospholipase NTE1 (1443 aa).

The Lumenal portion of the chain corresponds to 1–59; it reads MEEELAIEDLPRLTGTVSLNNGLLHSIYNETTVFKILRWSLVEIPKYILKLMSKNLEIN. Residues 60-80 form a helical membrane-spanning segment; it reads LNVSSILIITLLIAAGILVIV. The Cytoplasmic segment spans residues 81–1443; it reads RYKFLTGYSE…RIKMYRRNTM (1363 aa). The span at 103 to 118 shows a compositional bias: polar residues; that stretch reads ALGQQSTNYPKSTSSG. 2 disordered regions span residues 103-122 and 199-251; these read ALGQ…LFVE and KYDE…GKMH. Positions 210-235 are enriched in acidic residues; it reads EGEEADEDDEEEEKEVGDDGDDEMDV. A nucleoside 3',5'-cyclic phosphate contacts are provided by residues 619-750 and 746-871; these read LYKR…LKSL and KLKS…VASK. The 165-residue stretch at 1136–1300 folds into the PNPLA domain; it reads LVLGGGGSRG…LDNLPVMEMK (165 aa). The GXGXXG signature appears at 1140-1145; the sequence is GGGSRG. Residues 1167-1171 carry the GXSXG motif; the sequence is GTSIG. Catalysis depends on Ser1169, which acts as the Nucleophile. Catalysis depends on Asp1287, which acts as the Proton acceptor. The DGA/G motif lies at 1287 to 1289; the sequence is DGG.

This sequence belongs to the NTE family.

Its subcellular location is the endoplasmic reticulum membrane. The enzyme catalyses a 1-acyl-sn-glycero-3-phosphocholine + H2O = sn-glycerol 3-phosphocholine + a fatty acid + H(+). Inhibited by organophosphorus esters. Functionally, intracellular phospholipase B that catalyzes the double deacylation of phosphatidylcholine (PC) to glycerophosphocholine (GroPCho). Plays an important role in membrane lipid homeostasis. Responsible for the rapid PC turnover in response to inositol, elevated temperatures, or when choline is present in the growth medium. The chain is Lysophospholipase NTE1 (NTE1) from Lodderomyces elongisporus (strain ATCC 11503 / CBS 2605 / JCM 1781 / NBRC 1676 / NRRL YB-4239) (Yeast).